A 394-amino-acid polypeptide reads, in one-letter code: Multidrug resistance protein D (394 aa).

The Cytoplasmic portion of the chain corresponds to 1-8 (MKRQRNVN). The helical transmembrane segment at 9–29 (LLLMLVLLVAVGQMAQTIYIP) threads the bilayer. The Periplasmic portion of the chain corresponds to 30-46 (AIADMARDLNVREGAVQ). A helical transmembrane segment spans residues 47-67 (SVMGAYLLTYGVSQLFYGPIS). Residues 68–73 (DRVGRR) lie on the Cytoplasmic side of the membrane. A helical membrane pass occupies residues 74–94 (PVILVGMSIFMLATLVAVTTS). S95 is a topological domain (periplasmic). Residues 96–116 (LTVLIAASAMQGMGTGVGGVM) form a helical membrane-spanning segment. Residues 117 to 134 (ARTLPRDLYERTQLRHAN) are Cytoplasmic-facing. Residues 135 to 155 (SLLNMGILVSPLLAPLIGGLL) form a helical membrane-spanning segment. At 156–162 (DTMWNWR) the chain is on the periplasmic side. Residues 163–183 (ACYLFLLVLCAGVTFSMARWM) form a helical membrane-spanning segment. The Cytoplasmic segment spans residues 184 to 212 (PETRPVDAPRTRLLTSYKTLFGNSGFNCY). A helical membrane pass occupies residues 213–233 (LLMLIGGLAGIAAFEACSGVL). The Periplasmic segment spans residues 234–242 (MGAVLGLSS). Residues 243-263 (MTVSILFILPIPAAFFGAWFA) traverse the membrane as a helical segment. Residues 264-276 (GRPNKRFSTLMWQ) lie on the Cytoplasmic side of the membrane. A helical transmembrane segment spans residues 277-297 (SVICCLLAGLLMWIPDWFGVM). Residue N298 is a topological domain, periplasmic. Residues 299 to 319 (VWTLLVPAALFFFGAGMLFPL) form a helical membrane-spanning segment. At 320–329 (ATSGAMEPFP) the chain is on the cytoplasmic side. A helical transmembrane segment spans residues 330 to 350 (FLAGTAGALVGGLQNIGSGVL). At 351–364 (ASLSAMLPQTGQGS) the chain is on the periplasmic side. A helical membrane pass occupies residues 365-385 (LGLLMTLMGLLIVLCWLPLAT). Residues 386-394 (RMSHQGQPV) are Cytoplasmic-facing.

The protein belongs to the major facilitator superfamily.

It is found in the cell inner membrane. In terms of biological role, multidrug resistance pump that participates in a low energy shock adaptive response. The protein is Multidrug resistance protein D (emrD) of Escherichia coli (strain K12).